Reading from the N-terminus, the 192-residue chain is Elongation factor P (192 aa).

It belongs to the elongation factor P family.

It localises to the cytoplasm. The protein operates within protein biosynthesis; polypeptide chain elongation. In terms of biological role, involved in peptide bond synthesis. Stimulates efficient translation and peptide-bond synthesis on native or reconstituted 70S ribosomes in vitro. Probably functions indirectly by altering the affinity of the ribosome for aminoacyl-tRNA, thus increasing their reactivity as acceptors for peptidyl transferase. The chain is Elongation factor P from Borrelia garinii subsp. bavariensis (strain ATCC BAA-2496 / DSM 23469 / PBi) (Borreliella bavariensis).